The primary structure comprises 237 residues: Demethylmenaquinone methyltransferase (237 aa).

S-adenosyl-L-methionine is bound by residues Thr-58, Asp-79, and 106 to 107 (NA).

Belongs to the class I-like SAM-binding methyltransferase superfamily. MenG/UbiE family.

It catalyses the reaction a 2-demethylmenaquinol + S-adenosyl-L-methionine = a menaquinol + S-adenosyl-L-homocysteine + H(+). Its pathway is quinol/quinone metabolism; menaquinone biosynthesis; menaquinol from 1,4-dihydroxy-2-naphthoate: step 2/2. In terms of biological role, methyltransferase required for the conversion of demethylmenaquinol (DMKH2) to menaquinol (MKH2). This is Demethylmenaquinone methyltransferase from Anoxybacillus flavithermus (strain DSM 21510 / WK1).